The primary structure comprises 483 residues: Uridine/cytidine kinase UKL1, chloroplastic (483 aa).

The transit peptide at 1 to 47 (MPEDSTAIDYVMEKASGPHFSGLRLDGLLSSPSKSSVSSPSHFRLSN) directs the protein to the chloroplast. The tract at residues 59–264 (PHQPFVIGVT…IVQHIHTKLG (206 aa)) is uridine kinase. The segment at 274-483 (NVFVIETTFQ…FGDRYFGTDE (210 aa)) is uracil phosphoribosyltransferase. Residues K298, R307, and 341-344 (CKKL) each bind GTP. Positions 351 and 376 each coordinate 5-phospho-alpha-D-ribose 1-diphosphate. Residue R396 coordinates GTP. Residues D402, 407 to 410 (TGNS), and E473 contribute to the 5-phospho-alpha-D-ribose 1-diphosphate site. 472–474 (GEF) lines the uracil pocket.

It in the N-terminal section; belongs to the uridine kinase family. In the C-terminal section; belongs to the UPRTase family.

The protein localises to the plastid. The protein resides in the chloroplast. The catalysed reaction is cytidine + ATP = CMP + ADP + H(+). It catalyses the reaction uridine + ATP = UMP + ADP + H(+). Its pathway is pyrimidine metabolism; CTP biosynthesis via salvage pathway; CTP from cytidine: step 1/3. It participates in pyrimidine metabolism; UMP biosynthesis via salvage pathway; UMP from uridine: step 1/1. Functionally, involved in the pyrimidine salvage pathway. Phosphorylates uridine to uridine monophosphate (UMP). Phosphorylates cytidine to cytidine monophosphate (CMP). Does not possess uracil phosphoribosyltransferase (UPRTase) activity that catalyzes the conversion of uracil and 5-phospho-alpha-D-ribose 1-diphosphate (PRPP) to UMP and diphosphate. This chain is Uridine/cytidine kinase UKL1, chloroplastic, found in Arabidopsis thaliana (Mouse-ear cress).